The following is a 295-amino-acid chain: Glutamyl-Q tRNA(Asp) synthetase (295 aa).

L-glutamate-binding positions include 9-13 and Glu-45; that span reads RFAPT. Residues 12–22 carry the 'HIGH' region motif; that stretch reads PTPSGYLHFGS. The Zn(2+) site is built by Cys-101, Cys-103, Tyr-115, and Cys-119. Residues Tyr-172 and Arg-190 each coordinate L-glutamate. A 'KMSKS' region motif is present at residues 228–232; sequence KLGKS. An ATP-binding site is contributed by Lys-231.

The protein belongs to the class-I aminoacyl-tRNA synthetase family. GluQ subfamily. The cofactor is Zn(2+).

Catalyzes the tRNA-independent activation of glutamate in presence of ATP and the subsequent transfer of glutamate onto a tRNA(Asp). Glutamate is transferred on the 2-amino-5-(4,5-dihydroxy-2-cyclopenten-1-yl) moiety of the queuosine in the wobble position of the QUC anticodon. The polypeptide is Glutamyl-Q tRNA(Asp) synthetase (Pseudomonas syringae pv. syringae (strain B728a)).